The following is a 638-amino-acid chain: LIM domain kinase 2 (638 aa).

2 consecutive LIM zinc-binding domains span residues 12 to 63 (CPGC…CPKD) and 72 to 124 (CHGC…CGKC). The 88-residue stretch at 152–239 (LISMPATTEG…TLQLLIEHDP (88 aa)) folds into the PDZ domain. T210 bears the Phosphothreonine mark. Residues 279 to 304 (LRRRSLRRSNSISKSPGPSSPKEPLL) form a disordered region. Positions 286–302 (RSNSISKSPGPSSPKEP) are enriched in low complexity. Phosphoserine occurs at positions 293 and 298. In terms of domain architecture, Protein kinase spans 331–608 (LIHGEVLGKG…DSFEALSLYL (278 aa)). ATP is bound by residues 337–345 (LGKGFFGQA) and K360. D451 is a catalytic residue. Position 505 is a phosphothreonine; by ROCK1 and CDC42BP (T505).

Belongs to the protein kinase superfamily. TKL Ser/Thr protein kinase family. As to quaternary structure, interacts with LIMK2b. In terms of assembly, interacts with LIMK2a. Binds ROCK1 and MARF1. Interacts with NISCH. Post-translationally, phosphorylated on serine and/or threonine residues by ROCK1.

The protein localises to the cytoplasm. It localises to the cytoskeleton. Its subcellular location is the spindle. It is found in the microtubule organizing center. The protein resides in the centrosome. The protein localises to the nucleus. It localises to the perinuclear region. The catalysed reaction is L-seryl-[protein] + ATP = O-phospho-L-seryl-[protein] + ADP + H(+). The enzyme catalyses L-threonyl-[protein] + ATP = O-phospho-L-threonyl-[protein] + ADP + H(+). In terms of biological role, serine/threonine-protein kinase that plays an essential role in the regulation of actin filament dynamics. Acts downstream of several Rho family GTPase signal transduction pathways. Involved in astral microtubule organization and mitotic spindle orientation during early stages of mitosis by mediating phosphorylation of TPPP. Displays serine/threonine-specific phosphorylation of myelin basic protein and histone (MBP) in vitro. Suppresses ciliogenesis via multiple pathways; phosphorylation of CFL1, suppression of directional trafficking of ciliary vesicles to the ciliary base, and by facilitating YAP1 nuclear localization where it acts as a transcriptional corepressor of the TEAD4 target genes AURKA and PLK1. This chain is LIM domain kinase 2 (LIMK2), found in Homo sapiens (Human).